We begin with the raw amino-acid sequence, 59 residues long: Single-pass membrane and coiled-coil domain-containing protein 4 homolog (59 aa).

The segment covering 1 to 11 (MAGRNKAKPRL) has biased composition (basic residues). Positions 1–20 (MAGRNKAKPRLSKKEKEERR) are disordered. The stretch at 10–30 (RLSKKEKEERRKDMAEVQEKV) forms a coiled coil. A helical transmembrane segment spans residues 30 to 50 (VFSVVVPVVVAFTVVIMLIVY).

The protein belongs to the SMCO4 family.

It is found in the membrane. This is Single-pass membrane and coiled-coil domain-containing protein 4 homolog from Argas monolakensis (Mono lake bird tick).